A 550-amino-acid chain; its full sequence is Probable methionine--tRNA ligase, cytoplasmic (550 aa).

Positions 10–20 match the 'HIGH' region motif; it reads PYVNNQPHLGN. A 'KMSKS' region motif is present at residues 328–332; it reads KFSKS. Lysine 331 serves as a coordination point for ATP.

This sequence belongs to the class-I aminoacyl-tRNA synthetase family.

It localises to the cytoplasm. The enzyme catalyses tRNA(Met) + L-methionine + ATP = L-methionyl-tRNA(Met) + AMP + diphosphate. The polypeptide is Probable methionine--tRNA ligase, cytoplasmic (Encephalitozoon cuniculi (strain GB-M1) (Microsporidian parasite)).